Reading from the N-terminus, the 83-residue chain is Small ribosomal subunit protein bS18 (83 aa).

It belongs to the bacterial ribosomal protein bS18 family. As to quaternary structure, part of the 30S ribosomal subunit. Forms a tight heterodimer with protein bS6.

Its function is as follows. Binds as a heterodimer with protein bS6 to the central domain of the 16S rRNA, where it helps stabilize the platform of the 30S subunit. This chain is Small ribosomal subunit protein bS18, found in Tropheryma whipplei (strain TW08/27) (Whipple's bacillus).